A 561-amino-acid polypeptide reads, in one-letter code: Long-chain-fatty-acid--CoA ligase (561 aa).

Residue 213-224 coordinates ATP; the sequence is YTGGTTGVAKGA.

Belongs to the ATP-dependent AMP-binding enzyme family. Requires Mg(2+) as cofactor.

Its subcellular location is the membrane. The catalysed reaction is a long-chain fatty acid + ATP + CoA = a long-chain fatty acyl-CoA + AMP + diphosphate. It functions in the pathway lipid metabolism; fatty acid beta-oxidation. In terms of biological role, catalyzes the esterification, concomitant with transport, of exogenous long-chain fatty acids into metabolically active CoA thioesters for subsequent degradation or incorporation into phospholipids. The sequence is that of Long-chain-fatty-acid--CoA ligase (fadD) from Escherichia coli O6:H1 (strain CFT073 / ATCC 700928 / UPEC).